The chain runs to 122 residues: Large ribosomal subunit protein uL14 (122 aa).

It belongs to the universal ribosomal protein uL14 family. Part of the 50S ribosomal subunit. Forms a cluster with proteins L3 and L19. In the 70S ribosome, L14 and L19 interact and together make contacts with the 16S rRNA in bridges B5 and B8.

Binds to 23S rRNA. Forms part of two intersubunit bridges in the 70S ribosome. The chain is Large ribosomal subunit protein uL14 from Teredinibacter turnerae (strain ATCC 39867 / T7901).